The chain runs to 213 residues: Ethylene-responsive transcription factor WIN1 (213 aa).

The AP2/ERF DNA-binding region spans 15–72; sequence KFRGVRQRHWGSWVSEIRHPLLKRRVWLGTFETAEEAARAYDEAAVLMSGRNAKTNFP. Polar residues predominate over residues 70-80; the sequence is NFPIQRSSTGE. 2 disordered regions span residues 70–99 and 159–213; these read NFPI…GSST and ASTD…RFII. Residues 159 to 174 are compositionally biased toward low complexity; that stretch reads ASTDAASQSTSATTAP.

It belongs to the AP2/ERF transcription factor family. ERF subfamily. Mostly expressed in roots, stems and anthers, and, to a lower extent, in leaves, seeds and silks.

It is found in the nucleus. Functionally, promotes cuticle formation by inducing the expression of enzymes involved in wax biosynthesis, particularly promoting very-long-chain waxes formation. Confers drought resistance. Acts as a transcriptional activator binding directly to promoter regions of CER2, CER3.2 and KCS1, wax biosynthesis-related genes. Binds to the GCC-box pathogenesis-related promoter element. May be involved in the regulation of gene expression by stress factors and by components of stress signal transduction pathways. This Zea mays (Maize) protein is Ethylene-responsive transcription factor WIN1.